Here is a 183-residue protein sequence, read N- to C-terminus: Ubiquinol-cytochrome c reductase iron-sulfur subunit (183 aa).

A helical membrane pass occupies residues 21–41 (LIYGTTAVGAVGVALAVWPFI). Residues 88–181 (IVVARAVDPA…YAFTDDTTVL (94 aa)) form the Rieske domain. Positions 121, 123, 145, and 148 each coordinate [2Fe-2S] cluster. A disulfide bridge connects residues Cys-126 and Cys-147.

It belongs to the Rieske iron-sulfur protein family. In terms of assembly, the main subunits of complex b-c1 are: cytochrome b, cytochrome c1 and the Rieske protein. It depends on [2Fe-2S] cluster as a cofactor.

It is found in the cell inner membrane. The catalysed reaction is a quinol + 2 Fe(III)-[cytochrome c](out) = a quinone + 2 Fe(II)-[cytochrome c](out) + 2 H(+)(out). Component of the ubiquinol-cytochrome c reductase complex (complex III or cytochrome b-c1 complex), which is a respiratory chain that generates an electrochemical potential coupled to ATP synthesis. The sequence is that of Ubiquinol-cytochrome c reductase iron-sulfur subunit (petA) from Rhodospirillum rubrum.